Here is a 120-residue protein sequence, read N- to C-terminus: Chaperonin GroEL (120 aa).

ATP is bound at residue 23-27 (DGTTT).

It belongs to the chaperonin (HSP60) family. Forms a cylinder of 14 subunits composed of two heptameric rings stacked back-to-back. Interacts with the co-chaperonin GroES.

It is found in the cytoplasm. The catalysed reaction is ATP + H2O + a folded polypeptide = ADP + phosphate + an unfolded polypeptide.. Its function is as follows. Together with its co-chaperonin GroES, plays an essential role in assisting protein folding. The GroEL-GroES system forms a nano-cage that allows encapsulation of the non-native substrate proteins and provides a physical environment optimized to promote and accelerate protein folding. The chain is Chaperonin GroEL from Mycolicibacterium chitae (Mycobacterium chitae).